The chain runs to 269 residues: Tryptophan synthase alpha chain (269 aa).

Residues glutamate 41 and aspartate 52 each act as proton acceptor in the active site.

This sequence belongs to the TrpA family. As to quaternary structure, tetramer of two alpha and two beta chains.

The enzyme catalyses (1S,2R)-1-C-(indol-3-yl)glycerol 3-phosphate + L-serine = D-glyceraldehyde 3-phosphate + L-tryptophan + H2O. Its pathway is amino-acid biosynthesis; L-tryptophan biosynthesis; L-tryptophan from chorismate: step 5/5. Functionally, the alpha subunit is responsible for the aldol cleavage of indoleglycerol phosphate to indole and glyceraldehyde 3-phosphate. The polypeptide is Tryptophan synthase alpha chain (Geobacillus stearothermophilus (Bacillus stearothermophilus)).